Reading from the N-terminus, the 94-residue chain is Acylphosphatase (94 aa).

The region spanning 8–94 is the Acylphosphatase-like domain; it reads TLFIIVHGKV…GRRFKHFAQH (87 aa). Residues Arg23 and Asn41 contribute to the active site. The tract at residues 69-94 is disordered; the sequence is PPAASVTELESRREDGGRRFKHFAQH. A compositionally biased stretch (basic and acidic residues) spans 77-86; that stretch reads LESRREDGGR.

It belongs to the acylphosphatase family.

The catalysed reaction is an acyl phosphate + H2O = a carboxylate + phosphate + H(+). This chain is Acylphosphatase (acyP), found in Bordetella avium (strain 197N).